An 89-amino-acid chain; its full sequence is UPF0367 protein PCC8801_1959 (89 aa).

The protein belongs to the UPF0367 family.

The protein is UPF0367 protein PCC8801_1959 of Rippkaea orientalis (strain PCC 8801 / RF-1) (Cyanothece sp. (strain PCC 8801)).